A 114-amino-acid chain; its full sequence is Small ribosomal subunit protein bS6 (114 aa).

Belongs to the bacterial ribosomal protein bS6 family.

Binds together with bS18 to 16S ribosomal RNA. The polypeptide is Small ribosomal subunit protein bS6 (Protochlamydia amoebophila (strain UWE25)).